The following is a 474-amino-acid chain: Glutamine synthetase (474 aa).

Residues Glu-14–Gly-99 enclose the GS beta-grasp domain. The 369-residue stretch at Pro-106–Val-474 folds into the GS catalytic domain. Residues Glu-131 and Glu-133 each contribute to the Mg(2+) site. Glu-211 is a binding site for ATP. Positions 216 and 224 each coordinate Mg(2+). L-glutamate-binding positions include Asn-268–Gly-269 and Gly-269. His-273 serves as a coordination point for Mg(2+). Residues His-275–Ser-277 and Ser-277 contribute to the ATP site. Arg-325, Glu-331, and Arg-343 together coordinate L-glutamate. Positions 343, 348, and 357 each coordinate ATP. Glu-362 lines the Mg(2+) pocket. An L-glutamate-binding site is contributed by Arg-364. Tyr-402 is subject to O-AMP-tyrosine.

Belongs to the glutamine synthetase family. Oligomer of 12 subunits arranged in the form of two hexagons. Mg(2+) serves as cofactor.

It is found in the cytoplasm. The enzyme catalyses L-glutamate + NH4(+) + ATP = L-glutamine + ADP + phosphate + H(+). With respect to regulation, the activity of this enzyme could be controlled by adenylation under conditions of abundant glutamine. Functionally, involved in nitrogen metabolism via ammonium assimilation. Catalyzes the ATP-dependent biosynthesis of glutamine from glutamate and ammonia. In Nostoc sp. (strain PCC 7120 / SAG 25.82 / UTEX 2576), this protein is Glutamine synthetase.